A 342-amino-acid polypeptide reads, in one-letter code: S-adenosyl-L-methionine-dependent tRNA 4-demethylwyosine synthase (342 aa).

[2Fe-2S] cluster-binding residues include Cys-45, Cys-58, and Cys-71. The Radical SAM core domain maps to 64-312 (YGIHSHRCLQ…VKHLPGYHIE (249 aa)). Positions 81, 85, and 88 each coordinate [4Fe-4S] cluster.

This sequence belongs to the TYW1 family. As to quaternary structure, monomer. [2Fe-2S] cluster is required as a cofactor. Requires [4Fe-4S] cluster as cofactor.

The protein localises to the cytoplasm. The enzyme catalyses N(1)-methylguanosine(37) in tRNA(Phe) + pyruvate + S-adenosyl-L-methionine = 4-demethylwyosine(37) in tRNA(Phe) + 5'-deoxyadenosine + L-methionine + CO2 + H2O. Its function is as follows. Component of the wyosine derivatives biosynthesis pathway that catalyzes the condensation of N-methylguanine with 2 carbon atoms from pyruvate to form the tricyclic 4-demethylwyosine (imG-14) on guanosine-37 of tRNA(Phe). This is S-adenosyl-L-methionine-dependent tRNA 4-demethylwyosine synthase from Pyrococcus horikoshii (strain ATCC 700860 / DSM 12428 / JCM 9974 / NBRC 100139 / OT-3).